Here is a 248-residue protein sequence, read N- to C-terminus: 26.2 kDa heat shock protein, mitochondrial (248 aa).

Residues 1 to 32 (MASTVALKGRPLATLLRQLLAADAPPAATGRP) constitute a mitochondrion transit peptide. Positions 26 to 48 (PAATGRPVAAAPAASGKPVTAPA) are disordered. The 110-residue stretch at 139–248 (ATAAARRGGW…RKDVFQVNVE (110 aa)) folds into the sHSP domain.

It belongs to the small heat shock protein (HSP20) family. May form oligomeric structures.

Its subcellular location is the mitochondrion. In Oryza sativa subsp. japonica (Rice), this protein is 26.2 kDa heat shock protein, mitochondrial (HSP26.2).